We begin with the raw amino-acid sequence, 246 residues long: MSVPNEPDSSLAMHSWNLTPQQAIEVQKQLAVQTVRTGNPEGVQRVAGVDVSFNPREPKALVHAVVVVLSYPGLEVVDRQAVSAAVDFPYIPGLLSFREAPPILAAIGQLSQKPDLVIVDGHGYAHPRRLGIASHLGLFLDLPTIGCAKSILVGRADGDLAEAAGSLTDLLWRGEVVGRAVRTRSRVQPVYVSPGHRLGLDSAVEWVLRCCRGYRLPEPTRQAHNYSNLVRKARQPISLNGLSGAK.

Mg(2+) contacts are provided by D50 and D120.

This sequence belongs to the endonuclease V family. Mg(2+) serves as cofactor.

Its subcellular location is the cytoplasm. The enzyme catalyses Endonucleolytic cleavage at apurinic or apyrimidinic sites to products with a 5'-phosphate.. Its function is as follows. DNA repair enzyme involved in the repair of deaminated bases. Selectively cleaves double-stranded DNA at the second phosphodiester bond 3' to a deoxyinosine leaving behind the intact lesion on the nicked DNA. The chain is Endonuclease V from Gloeobacter violaceus (strain ATCC 29082 / PCC 7421).